A 236-amino-acid polypeptide reads, in one-letter code: MNAAIEHVQAVAFDLDGTLCDSVPDLAAAAEAMLEQLGMKPLPAKVVESYVGDGIGKLVHRVLTNDRDREADSELWEKGFVSYMKYYRDHLSVFTRPYPETEAGLALLKSLGIPLVIITNKNEILAAELLKQLGLADYFSLILGGDSLPEKKPSPLPLRHAAEVLGIDAANMLMVGDSRNDIIAAKAAGCLSVGVTFGYGDMTLLSQDDTTRPDRIIGALPEIYENLQPQKNKDEE.

The active-site Nucleophile is Asp-14. Residues Asp-14, Asp-16, and Asp-177 each contribute to the Mg(2+) site.

The protein belongs to the HAD-like hydrolase superfamily. CbbY/CbbZ/Gph/YieH family. It depends on Mg(2+) as a cofactor.

The enzyme catalyses 2-phosphoglycolate + H2O = glycolate + phosphate. Its pathway is organic acid metabolism; glycolate biosynthesis; glycolate from 2-phosphoglycolate: step 1/1. In terms of biological role, specifically catalyzes the dephosphorylation of 2-phosphoglycolate. Is involved in the dissimilation of the intracellular 2-phosphoglycolate formed during the DNA repair of 3'-phosphoglycolate ends, a major class of DNA lesions induced by oxidative stress. The protein is Phosphoglycolate phosphatase of Neisseria gonorrhoeae (strain ATCC 700825 / FA 1090).